Here is a 262-residue protein sequence, read N- to C-terminus: G patch domain-containing protein 11 (262 aa).

3 stretches are compositionally biased toward basic and acidic residues: residues 39-61 (LHKE…ESRE), 114-127 (EEVK…ELQN), and 136-165 (QHLE…DLRK). Disordered regions lie at residues 39 to 71 (LHKE…IGSQ) and 88 to 169 (GLGK…SQRA). Positions 41-62 (KEKDIQNRQKSFKEQEKESREA) form a coiled coil. The G-patch domain occupies 70–116 (SQNKGFALLQKMGYKAGQGLGKEGAGRVEPVPLNIKTDRGGIGMEEV).

It belongs to the GPATCH11 family.

The protein resides in the chromosome. It localises to the centromere. Its subcellular location is the kinetochore. The chain is G patch domain-containing protein 11 (gpatch11) from Danio rerio (Zebrafish).